The following is a 120-amino-acid chain: Large ribosomal subunit protein bL20 (120 aa).

The protein belongs to the bacterial ribosomal protein bL20 family.

In terms of biological role, binds directly to 23S ribosomal RNA and is necessary for the in vitro assembly process of the 50S ribosomal subunit. It is not involved in the protein synthesizing functions of that subunit. The polypeptide is Large ribosomal subunit protein bL20 (Ureaplasma urealyticum serovar 10 (strain ATCC 33699 / Western)).